Here is a 513-residue protein sequence, read N- to C-terminus: GMP synthase [glutamine-hydrolyzing] (513 aa).

One can recognise a Glutamine amidotransferase type-1 domain in the interval 9–198; the sequence is LILVLDFGSQ…VRRVCNCTGE (190 aa). Residue Cys86 is the Nucleophile of the active site. Active-site residues include His172 and Glu174. Residues 199-388 form the GMPS ATP-PPase domain; the sequence is WTMENFIEIE…LGIPEHLVWR (190 aa). Residue 226–232 coordinates ATP; the sequence is SGGVDSS.

Homodimer.

The enzyme catalyses XMP + L-glutamine + ATP + H2O = GMP + L-glutamate + AMP + diphosphate + 2 H(+). Its pathway is purine metabolism; GMP biosynthesis; GMP from XMP (L-Gln route): step 1/1. Its function is as follows. Catalyzes the synthesis of GMP from XMP. This chain is GMP synthase [glutamine-hydrolyzing], found in Staphylococcus epidermidis (strain ATCC 35984 / DSM 28319 / BCRC 17069 / CCUG 31568 / BM 3577 / RP62A).